Reading from the N-terminus, the 488-residue chain is Glutamyl-tRNA(Gln) amidotransferase subunit A (488 aa).

Catalysis depends on charge relay system residues Lys77 and Ser152. Ser176 serves as the catalytic Acyl-ester intermediate.

It belongs to the amidase family. GatA subfamily. Heterotrimer of A, B and C subunits.

The enzyme catalyses L-glutamyl-tRNA(Gln) + L-glutamine + ATP + H2O = L-glutaminyl-tRNA(Gln) + L-glutamate + ADP + phosphate + H(+). Its function is as follows. Allows the formation of correctly charged Gln-tRNA(Gln) through the transamidation of misacylated Glu-tRNA(Gln) in organisms which lack glutaminyl-tRNA synthetase. The reaction takes place in the presence of glutamine and ATP through an activated gamma-phospho-Glu-tRNA(Gln). In Streptococcus suis (strain 05ZYH33), this protein is Glutamyl-tRNA(Gln) amidotransferase subunit A.